We begin with the raw amino-acid sequence, 414 residues long: MNTSRLFSLLFQGSLVKRIAAGLVLGIVVALISAPLQETIGFNLAEKVGVLGTIFVKALRAVAPILIFFLVMAALANRKIGTKSNMKEIIVLYLLGTFLAAFVAVIAGFVFPTEVVLAAKEDSSSAPQAVGQVLLTLILNVVDNPLNAIFKANFIGVLAWSIGLGLALRHASDATKNVLSDFAEGVSKIVHVIISFAPFGVFGLVAETLSDKGLVALGGYVQLLAVLIGTMLFTAFVVNPILVYWKIRRNPYPLVWTCVRESGVTAFFTRSSAANIPVNIELAKRLNLDEETYSVSIPLGANINMAGAAITITILTLAAVHTLGLEVSFVSALLLSIVAALCACGASGVAGGSLLLIPLACSLFGISDDVAAQMIGVGFIIGILQDSTETALNSSTDVLFTAAVCMEEERKNAA.

Transmembrane regions (helical) follow at residues 22–42 (GLVLGIVVALISAPLQETIGF), 54–74 (IFVKALRAVAPILIFFLVMAA), 89–109 (IIVLYLLGTFLAAFVAVIAGF), 148–168 (AIFKANFIGVLAWSIGLGLAL), 189–209 (IVHVIISFAPFGVFGLVAETL), 223–243 (LLAVLIGTMLFTAFVVNPILV), 305–325 (MAGAAITITILTLAAVHTLGL), and 337–357 (IVAALCACGASGVAGGSLLLI).

It belongs to the dicarboxylate/amino acid:cation symporter (DAACS) (TC 2.A.23) family.

Its subcellular location is the cell inner membrane. It carries out the reaction L-serine(in) + Na(+)(in) = L-serine(out) + Na(+)(out). It catalyses the reaction L-threonine(in) + Na(+)(in) = L-threonine(out) + Na(+)(out). Its function is as follows. Involved in the import of serine and threonine into the cell, with the concomitant import of sodium (symport system). In Haemophilus influenzae (strain PittGG), this protein is Serine/threonine transporter SstT.